Here is an 883-residue protein sequence, read N- to C-terminus: Phosphoenolpyruvate carboxylase (883 aa).

Catalysis depends on residues His138 and Lys546.

It belongs to the PEPCase type 1 family. Homotetramer. Mg(2+) is required as a cofactor.

It catalyses the reaction oxaloacetate + phosphate = phosphoenolpyruvate + hydrogencarbonate. Its activity is regulated as follows. The enzyme has distinct binding sites for each of the allosteric effectors such as acetyl-CoA, fructose 1,6-bisphosphate, guanosine 3'-diphosphate 5'-diphosphate, long chain fatty acids, and L-aspartate. Its function is as follows. Forms oxaloacetate, a four-carbon dicarboxylic acid source for the tricarboxylic acid cycle. This Escherichia coli O157:H7 protein is Phosphoenolpyruvate carboxylase.